The primary structure comprises 89 residues: Small ribosomal subunit protein uS14 (89 aa).

The protein belongs to the universal ribosomal protein uS14 family. As to quaternary structure, part of the 30S ribosomal subunit. Contacts proteins S3 and S10.

Functionally, binds 16S rRNA, required for the assembly of 30S particles and may also be responsible for determining the conformation of the 16S rRNA at the A site. This is Small ribosomal subunit protein uS14 from Exiguobacterium sibiricum (strain DSM 17290 / CCUG 55495 / CIP 109462 / JCM 13490 / 255-15).